Reading from the N-terminus, the 518-residue chain is GMP synthase [glutamine-hydrolyzing] (518 aa).

Residues 13–203 form the Glutamine amidotransferase type-1 domain; the sequence is KIIVLDFGSQ…ALNVCGCKGD (191 aa). C90 acts as the Nucleophile in catalysis. Catalysis depends on residues H177 and E179. The region spanning 204–393 is the GMPS ATP-PPase domain; that stretch reads WTMENFSEVE…LGMPDAIVWR (190 aa). Residue 231–237 coordinates ATP; the sequence is SGGVDSS.

As to quaternary structure, homodimer.

It carries out the reaction XMP + L-glutamine + ATP + H2O = GMP + L-glutamate + AMP + diphosphate + 2 H(+). The protein operates within purine metabolism; GMP biosynthesis; GMP from XMP (L-Gln route): step 1/1. Catalyzes the synthesis of GMP from XMP. This Listeria welshimeri serovar 6b (strain ATCC 35897 / DSM 20650 / CCUG 15529 / CIP 8149 / NCTC 11857 / SLCC 5334 / V8) protein is GMP synthase [glutamine-hydrolyzing].